The primary structure comprises 258 residues: Ubiquinone/menaquinone biosynthesis C-methyltransferase UbiE (258 aa).

A disordered region spans residues methionine 1–glutamate 20. Residues threonine 81, aspartate 102, and asparagine 130–alanine 131 contribute to the S-adenosyl-L-methionine site.

Belongs to the class I-like SAM-binding methyltransferase superfamily. MenG/UbiE family.

The catalysed reaction is a 2-demethylmenaquinol + S-adenosyl-L-methionine = a menaquinol + S-adenosyl-L-homocysteine + H(+). The enzyme catalyses a 2-methoxy-6-(all-trans-polyprenyl)benzene-1,4-diol + S-adenosyl-L-methionine = a 5-methoxy-2-methyl-3-(all-trans-polyprenyl)benzene-1,4-diol + S-adenosyl-L-homocysteine + H(+). The protein operates within quinol/quinone metabolism; menaquinone biosynthesis; menaquinol from 1,4-dihydroxy-2-naphthoate: step 2/2. Its pathway is cofactor biosynthesis; ubiquinone biosynthesis. Methyltransferase required for the conversion of demethylmenaquinol (DMKH2) to menaquinol (MKH2) and the conversion of 2-polyprenyl-6-methoxy-1,4-benzoquinol (DDMQH2) to 2-polyprenyl-3-methyl-6-methoxy-1,4-benzoquinol (DMQH2). The protein is Ubiquinone/menaquinone biosynthesis C-methyltransferase UbiE of Rhizobium etli (strain CIAT 652).